We begin with the raw amino-acid sequence, 140 residues long: ATP synthase epsilon chain (140 aa).

Belongs to the ATPase epsilon chain family. F-type ATPases have 2 components, CF(1) - the catalytic core - and CF(0) - the membrane proton channel. CF(1) has five subunits: alpha(3), beta(3), gamma(1), delta(1), epsilon(1). CF(0) has three main subunits: a, b and c.

It localises to the cell inner membrane. In terms of biological role, produces ATP from ADP in the presence of a proton gradient across the membrane. The polypeptide is ATP synthase epsilon chain (Vibrio parahaemolyticus serotype O3:K6 (strain RIMD 2210633)).